Here is a 154-residue protein sequence, read N- to C-terminus: Large ribosomal subunit protein uL30 (154 aa).

It belongs to the universal ribosomal protein uL30 family. As to quaternary structure, part of the 50S ribosomal subunit.

This chain is Large ribosomal subunit protein uL30, found in Methanoregula boonei (strain DSM 21154 / JCM 14090 / 6A8).